The following is a 266-amino-acid chain: PTS system sorbose-specific EIIC component (266 aa).

One can recognise a PTS EIIC type-4 domain in the interval 1–237; sequence MEISTLQIIA…GGVGVIIALI (237 aa). Helical transmembrane passes span 3 to 23, 33 to 53, 79 to 99, 100 to 120, 151 to 171, 183 to 203, and 219 to 239; these read ISTL…MGSV, LIAC…VMLG, IISA…IAIA, LPVA…TVVF, VAIP…SSML, QIAG…MMGV, and YLDF…LIYI.

Its subcellular location is the cell inner membrane. Functionally, the phosphoenolpyruvate-dependent sugar phosphotransferase system (PTS), a major carbohydrate active transport system, catalyzes the phosphorylation of incoming sugar substrates concomitant with their translocation across the cell membrane. The enzyme II SorABFM PTS system is involved in L-sorbose transport. This Klebsiella pneumoniae protein is PTS system sorbose-specific EIIC component.